The chain runs to 268 residues: CCAAT/enhancer-binding protein delta (268 aa).

3 disordered regions span residues 1-50, 98-132, and 152-223; these read MSAA…STTP, LELLQGGPTRPPGVGSIARGPLKREPDWGDGDAPG, and AAQP…QQKL. Position 2 is an N-acetylserine (Ser-2). A Glycyl lysine isopeptide (Lys-Gly) (interchain with G-Cter in SUMO) cross-link involves residue Lys-120. Residues 155-173 show a composition bias toward pro residues; that stretch reads PTPPTSPEPPRGSPGPSLA. Positions 177 to 201 are enriched in basic and acidic residues; that stretch reads VREKGAGKRGPDRGSPEYRQRRERN. In terms of domain architecture, bZIP spans 191–254; that stretch reads SPEYRQRRER…ASLRQFFKEL (64 aa). The interval 195 to 222 is basic motif; it reads RQRRERNNIAVRKSRDKAKRRNQEMQQK. A leucine-zipper region spans residues 226-254; the sequence is LSAENEKLHQRVEQLTRDLASLRQFFKEL.

Belongs to the bZIP family. C/EBP subfamily. As to quaternary structure, binds DNA as a homodimer and as a heterodimer. Can form stable heterodimers with CEBPA, CEBPB and CEBPE. Directly interacts with SPI1/PU.1; this interaction does not affect DNA-binding properties of each partner. Interacts with PRDM16. In terms of tissue distribution, ubiquitously expressed.

The protein resides in the nucleus. Transcription activator that recognizes two different DNA motifs: the CCAAT homology common to many promoters and the enhanced core homology common to many enhancers. Important transcription factor regulating the expression of genes involved in immune and inflammatory responses. Transcriptional activator that enhances IL6 transcription alone and as heterodimer with CEBPB. The polypeptide is CCAAT/enhancer-binding protein delta (Cebpd) (Rattus norvegicus (Rat)).